The chain runs to 151 residues: UPF0178 protein ESA_02916 (151 aa).

Belongs to the UPF0178 family.

The sequence is that of UPF0178 protein ESA_02916 from Cronobacter sakazakii (strain ATCC BAA-894) (Enterobacter sakazakii).